We begin with the raw amino-acid sequence, 1416 residues long: DNA-directed RNA polymerase subunit beta (1416 aa).

It belongs to the RNA polymerase beta chain family. In terms of assembly, in plastids the minimal PEP RNA polymerase catalytic core is composed of four subunits: alpha, beta, beta', and beta''. When a (nuclear-encoded) sigma factor is associated with the core the holoenzyme is formed, which can initiate transcription.

It is found in the plastid. The protein resides in the chloroplast. The catalysed reaction is RNA(n) + a ribonucleoside 5'-triphosphate = RNA(n+1) + diphosphate. Functionally, DNA-dependent RNA polymerase catalyzes the transcription of DNA into RNA using the four ribonucleoside triphosphates as substrates. This chain is DNA-directed RNA polymerase subunit beta, found in Oltmannsiellopsis viridis (Marine flagellate).